The sequence spans 626 residues: Ankyrin repeat domain-containing protein 13B (626 aa).

N-acetylmethionine is present on Met-1. ANK repeat units lie at residues 47-76 (RGRTPLHLATTLGHLECARVLLAHGADVGR) and 80-109 (SGWTVLQEAVSTRDLELVQLVLRYRDYQRV). The tract at residues 442 to 470 (PVPSVRGSPGSETPSPGSDSSSVSSSSST) is disordered. Low complexity predominate over residues 448–470 (GSPGSETPSPGSDSSSVSSSSST). Residues 503–522 (EDDDLLRFAIQQSLLEAGSE) enclose the UIM 1 domain. Residues 534 to 614 (NSKPGTHPMS…RRRVRQEEEE (81 aa)) form a disordered region. Residues 554-575 (PPTPQRQPMPPAPVPSPRPSPG) are compositionally biased toward pro residues. UIM domains are found at residues 585–604 (SYDEQLRLAMELSAQEQEER) and 610–626 (QEEEELERILRLSLTEQ).

Interacts with EGFR (ubiquitinated); the interaction is direct and may regulate EGFR internalization.

The protein resides in the cell membrane. It localises to the late endosome. It is found in the early endosome. Its function is as follows. Ubiquitin-binding protein that specifically recognizes and binds 'Lys-63'-linked ubiquitin. Does not bind 'Lys-48'-linked ubiquitin. Positively regulates the internalization of ligand-activated EGFR by binding to the Ub moiety of ubiquitinated EGFR at the cell membrane. The protein is Ankyrin repeat domain-containing protein 13B (Ankrd13b) of Mus musculus (Mouse).